Reading from the N-terminus, the 115-residue chain is Phosphoribosyl-AMP cyclohydrolase (115 aa).

D80 contacts Mg(2+). Zn(2+) is bound at residue C81. Residues D82 and D84 each contribute to the Mg(2+) site. Positions 97 and 104 each coordinate Zn(2+).

It belongs to the PRA-CH family. As to quaternary structure, homodimer. Requires Mg(2+) as cofactor. Zn(2+) is required as a cofactor.

The protein resides in the cytoplasm. It catalyses the reaction 1-(5-phospho-beta-D-ribosyl)-5'-AMP + H2O = 1-(5-phospho-beta-D-ribosyl)-5-[(5-phospho-beta-D-ribosylamino)methylideneamino]imidazole-4-carboxamide. It participates in amino-acid biosynthesis; L-histidine biosynthesis; L-histidine from 5-phospho-alpha-D-ribose 1-diphosphate: step 3/9. Its function is as follows. Catalyzes the hydrolysis of the adenine ring of phosphoribosyl-AMP. The chain is Phosphoribosyl-AMP cyclohydrolase from Mycolicibacterium gilvum (strain PYR-GCK) (Mycobacterium gilvum (strain PYR-GCK)).